Consider the following 226-residue polypeptide: Regulator of microtubule dynamics protein 1 (226 aa).

Belongs to the FAM82/RMD family. Interacts with air-2.

It localises to the cytoplasm. It is found in the cytoskeleton. Its subcellular location is the spindle pole. Functionally, acts in chromosome segregation and organization during mitosis. The sequence is that of Regulator of microtubule dynamics protein 1 (rmd-1) from Caenorhabditis elegans.